A 628-amino-acid polypeptide reads, in one-letter code: Kinesin-like protein subito (628 aa).

A disordered region spans residues 28–68 (RFRPRPNKKMRLFDNIQESEEESFSEYSDTESEYKYQSSEA). Residues 44-58 (QESEEESFSEYSDTE) show a composition bias toward acidic residues. The 393-residue stretch at 87 to 479 (GPQVFLRLRP…LNFASIAKNI (393 aa)) folds into the Kinesin motor domain. 169–176 (GTSGSGKT) provides a ligand contact to ATP. A coiled-coil region spans residues 509-612 (DYTKELEDEN…KNPASDTDIS (104 aa)). The tract at residues 596–628 (KDEIEELKNPASDTDISDDPNESKSPIEILDDD) is disordered. At Ser607 the chain carries Phosphoserine. A Phosphothreonine modification is found at Thr609. Position 612 is a phosphoserine (Ser612).

The protein belongs to the TRAFAC class myosin-kinesin ATPase superfamily. Kinesin family.

The protein resides in the cytoplasm. It localises to the cytoskeleton. In terms of biological role, required during female meiosis for bipolar spindle formation in the absence of the centrosomes and chromosome homolog segregation. Also has roles in male meiosis and mitotic divisions of the early embryo. The sequence is that of Kinesin-like protein subito (sub) from Drosophila melanogaster (Fruit fly).